Reading from the N-terminus, the 146-residue chain is Hemoglobin subunit beta (146 aa).

Residue Val1 is modified to N-acetylvaline. Residues 2-146 (HLTGEEKAAV…VATALAHKYH (145 aa)) enclose the Globin domain. Position 12 is a phosphothreonine (Thr12). Ser44 bears the Phosphoserine mark. The residue at position 59 (Lys59) is an N6-acetyllysine. His63 is a heme b binding site. N6-acetyllysine is present on Lys82. His92 provides a ligand contact to heme b. An S-nitrosocysteine modification is found at Cys93. Residue Lys144 is modified to N6-acetyllysine.

Belongs to the globin family. As to quaternary structure, heterotetramer of two alpha chains and two beta chains. As to expression, red blood cells.

In terms of biological role, involved in oxygen transport from the lung to the various peripheral tissues. This is Hemoglobin subunit beta (HBB) from Macroderma gigas (Australian ghost bat).